The chain runs to 423 residues: Methanol:N,N-dimethyl-4-nitrosoaniline oxidoreductase (423 aa).

Belongs to the iron-containing alcohol dehydrogenase family. As to quaternary structure, homodecamer. The cofactor is Mg(2+). Requires Zn(2+) as cofactor. It depends on NADPH as a cofactor.

The enzyme catalyses methanol + A = formaldehyde + AH2. Functionally, catalyzes the oxidation of methanol to yield formaldehyde. While the in vivo electron acceptor is not known, N,N-dimethyl-4-nitrosoaniline (NDMA) can serve this function in vitro and is reduced to 4-(hydroxylamino)-N,N-dimethylaniline. In Rhodococcus erythropolis (Arthrobacter picolinophilus), this protein is Methanol:N,N-dimethyl-4-nitrosoaniline oxidoreductase (thcE).